A 458-amino-acid chain; its full sequence is Probable threonine--tRNA ligase, cytoplasmic (458 aa).

In terms of domain architecture, TGS spans 41-104 (DPIKITLLPD…EGDCSLEIFG (64 aa)).

It belongs to the class-II aminoacyl-tRNA synthetase family.

The protein resides in the cytoplasm. It carries out the reaction tRNA(Thr) + L-threonine + ATP = L-threonyl-tRNA(Thr) + AMP + diphosphate + H(+). The protein is Probable threonine--tRNA ligase, cytoplasmic of Arabidopsis thaliana (Mouse-ear cress).